The following is a 120-amino-acid chain: Small ribosomal subunit protein bS6 (120 aa).

The disordered stretch occupies residues 93-120; that stretch reads KKADTAPSSMMKTVEREEARKASQTEQA. The span at 105–120 shows a compositional bias: basic and acidic residues; it reads TVEREEARKASQTEQA.

This sequence belongs to the bacterial ribosomal protein bS6 family.

In terms of biological role, binds together with bS18 to 16S ribosomal RNA. This chain is Small ribosomal subunit protein bS6, found in Delftia acidovorans (strain DSM 14801 / SPH-1).